A 381-amino-acid chain; its full sequence is PqqA peptide cyclase (381 aa).

The 217-residue stretch at 12 to 228 (VGPPLWLLAE…AEYRQRLAAE (217 aa)) folds into the Radical SAM core domain. [4Fe-4S] cluster contacts are provided by Cys-26, Cys-30, and Cys-33.

It belongs to the radical SAM superfamily. PqqE family. In terms of assembly, interacts with PqqD. The interaction is necessary for activity of PqqE. The cofactor is [4Fe-4S] cluster.

The catalysed reaction is [PQQ precursor protein] + S-adenosyl-L-methionine = E-Y cross-linked-[PQQ precursor protein] + 5'-deoxyadenosine + L-methionine + H(+). It functions in the pathway cofactor biosynthesis; pyrroloquinoline quinone biosynthesis. Its function is as follows. Catalyzes the cross-linking of a glutamate residue and a tyrosine residue in the PqqA protein as part of the biosynthesis of pyrroloquinoline quinone (PQQ). The sequence is that of PqqA peptide cyclase from Pseudomonas aeruginosa (strain LESB58).